We begin with the raw amino-acid sequence, 212 residues long: Bcl-2-related ovarian killer protein (212 aa).

Ser-7 bears the Phosphoserine mark. The interactions with ITPR1 stretch occupies residues 15 to 45 (MDAFDRSPTDKELVAQAKALGREYVHARLLR). Glycyl lysine isopeptide (Lys-Gly) (interchain with G-Cter in ubiquitin) cross-links involve residues Lys-25 and Lys-32. A BH4 motif is present at residues 32–44 (KALGREYVHARLL). Positions 66–82 (VCAVLLRLGDELEMIRP) match the BH3 motif. The nuclear export signal stretch occupies residues 70–78 (LLRLGDELE). Residues 112–131 (HIFSAGITWGKVVSLYAVAA) carry the BH1 motif. Residues Lys-159 and Lys-176 each participate in a glycyl lysine isopeptide (Lys-Gly) (interchain with G-Cter in ubiquitin) cross-link. The BH2 signature appears at 164–178 (WLRRRGGWTDVLKCV). Residues 189-209 (WLVAALCSFGRFLKAAFFVLL) traverse the membrane as a helical segment.

Belongs to the Bcl-2 family. Monomer; positively regulates apoptotic process. Homodimer. Heterodimer. Oligomer; promoted by apoptotic stimuli and BH3-only proteins; mediates constitutive activation. Interacts (via BH4 domain) with ITPR1; enhances BOK expression and stabilization; limits apoptosis and prevents ubiquitination and then degradation; protects ITPR1 from proteolysis by CASP3 during apoptosis. Interacts with ITPR2 and ITPR3; binds most strongly to ITPR2, and barely to ITPR3; regulates their expression. Interacts with XPO1; translocates to the cytoplasm. Interacts with BNIP3; promotes oligomerization. In terms of processing, ubiquitinated by AMFR/gp78 E3 ubiquitin ligase complex; mediates degradation by ubiquitin-proteasome pathway in a VCP/p97-dependent manner; prevents from pro-apoptotic activity; promotes degradation of newly synthesized proteins that are not ITPR1 associated. As to expression, expressed mainly in oocytes; weak expression in granulosa cells of the developing follicles. In adult human ovaries, expressed in granulosa cells at all follicular stages, but expression in primordial/primary follicles granulosa cell is stronger than in secondary and antral follicles.

It is found in the mitochondrion membrane. The protein resides in the endoplasmic reticulum membrane. Its subcellular location is the mitochondrion inner membrane. The protein localises to the cytoplasm. It localises to the nucleus. It is found in the mitochondrion. The protein resides in the endoplasmic reticulum. Its subcellular location is the mitochondrion outer membrane. The protein localises to the early endosome membrane. It localises to the recycling endosome membrane. It is found in the nucleus outer membrane. The protein resides in the golgi apparatus. Its subcellular location is the cis-Golgi network membrane. The protein localises to the trans-Golgi network membrane. It localises to the membrane. Its function is as follows. Apoptosis regulator that functions through different apoptotic signaling pathways. Plays a roles as pro-apoptotic protein that positively regulates intrinsic apoptotic process in a BAX- and BAK1-dependent manner or in a BAX- and BAK1-independent manner. In response to endoplasmic reticulum stress promotes mitochondrial apoptosis through downstream BAX/BAK1 activation and positive regulation of PERK-mediated unfolded protein response. Activates apoptosis independently of heterodimerization with survival-promoting BCL2 and BCL2L1 through induction of mitochondrial outer membrane permeabilization, in a BAX- and BAK1-independent manner, in response to inhibition of ERAD-proteasome degradation system, resulting in cytochrome c release. In response to DNA damage, mediates intrinsic apoptotic process in a TP53-dependent manner. Plays a role in granulosa cell apoptosis by CASP3 activation. Plays a roles as anti-apoptotic protein during neuronal apoptotic process, by negatively regulating poly ADP-ribose polymerase-dependent cell death through regulation of neuronal calcium homeostasis and mitochondrial bioenergetics in response to NMDA excitation. In addition to its role in apoptosis, may regulate trophoblast cell proliferation during the early stages of placental development, by acting on G1/S transition through regulation of CCNE1 expression. May also play a role as an inducer of autophagy by disrupting interaction between MCL1 and BECN1. In terms of biological role, pro-apoptotic molecule exerting its function through the mitochondrial pathway. This Homo sapiens (Human) protein is Bcl-2-related ovarian killer protein.